The following is a 277-amino-acid chain: Inositol monophosphatase 1 (277 aa).

Residues Glu70, Asp90, Ile92, and Asp93 each contribute to the Mg(2+) site. Glu70 contacts substrate. Substrate is bound by residues 92-95, 194-196, Glu213, and Asp220; these read IDGT and GTA. Asp220 contacts Mg(2+).

This sequence belongs to the inositol monophosphatase superfamily. In terms of assembly, homodimer. Mg(2+) serves as cofactor. In terms of tissue distribution, ubiquitous.

It localises to the cytoplasm. It carries out the reaction a myo-inositol phosphate + H2O = myo-inositol + phosphate. The catalysed reaction is 1D-myo-inositol 1-phosphate + H2O = myo-inositol + phosphate. It catalyses the reaction 1D-myo-inositol 2-phosphate + H2O = myo-inositol + phosphate. The enzyme catalyses 1D-myo-inositol 3-phosphate + H2O = myo-inositol + phosphate. It carries out the reaction 1D-myo-inositol 4-phosphate + H2O = myo-inositol + phosphate. The catalysed reaction is 1D-myo-inositol 5-phosphate + H2O = myo-inositol + phosphate. It catalyses the reaction 1D-myo-inositol 6-phosphate + H2O = myo-inositol + phosphate. The enzyme catalyses scyllo-inositol 1-phosphate + H2O = scyllo-inositol + phosphate. It carries out the reaction alpha-D-galactose 1-phosphate + H2O = D-galactose + phosphate. The catalysed reaction is alpha-D-glucose 1-phosphate + H2O = D-glucose + phosphate. It catalyses the reaction D-glucose 6-phosphate + H2O = D-glucose + phosphate. The enzyme catalyses beta-D-fructose 1-phosphate + H2O = D-fructose + phosphate. It carries out the reaction glycerol 2-phosphate + H2O = glycerol + phosphate. The catalysed reaction is adenosine 2'-phosphate + H2O = adenosine + phosphate. It functions in the pathway polyol metabolism; myo-inositol biosynthesis; myo-inositol from D-glucose 6-phosphate: step 2/2. Activity with myo-inositol monophosphate and D-galactose 1-phosphate is inhibited by Li(+), Ca(2+) and Mn(2+), but also by Mg(2+) at concentrations above 3 mM. Functionally, phosphatase involved in the dephosphorylation of myo-inositol monophosphate to generate myo-inositol. Is also able to dephosphorylate scyllo-inositol-phosphate, myo-inositol 1,4-diphosphate, scyllo-inositol-1,3-diphosphate and scyllo-inositol-1,4-diphosphate. Also dephosphorylates in vitro other sugar-phosphates including D-galactose-1-phosphate, glucose-1-phosphate, glucose-6-phosphate, fructose-1-phosphate, beta-glycerophosphate and 2'-AMP. Responsible for the provision of inositol required for synthesis of phosphatidylinositol and polyphosphoinositides, and involved in maintaining normal brain function. Has been implicated as the pharmacological target for lithium Li(+) action in brain. Is equally active with myo-inositol monophosphate and D-galactose 1-phosphate. The chain is Inositol monophosphatase 1 (Impa1) from Rattus norvegicus (Rat).